The following is a 566-amino-acid chain: SRSF protein kinase 3 (566 aa).

Residues 1–13 are compositionally biased toward gly residues; it reads MSASTGGGGGGDS. The segment at 1 to 60 is disordered; sequence MSASTGGGGGGDSGSSSSSSSQASCGPEPSGSELAPPTPAPRMLQGLLGSDDEEQEDPKD. Positions 14 to 26 are enriched in low complexity; sequence GSSSSSSSQASCG. Phosphoserine is present on serine 50. The region spanning 79-564 is the Protein kinase domain; that stretch reads YHVVRKLGWG…AADCLQHPWL (486 aa). ATP-binding positions include 85–93 and lysine 108; that span reads LGWGHFSTV. Residue aspartate 212 is the Proton acceptor of the active site. Residues 236-254 show a composition bias toward polar residues; the sequence is EWQQSGAPPPSRSTVSTAP. 2 disordered regions span residues 236–283 and 295–353; these read EWQQ…LLEE and EAAA…SGFS. Residues 263–278 show a composition bias toward basic residues; the sequence is SKNKRKKMRRKRKQQK. Serine 329 carries the post-translational modification Phosphoserine. Residues 330 to 339 show a composition bias toward low complexity; sequence PASSSPAPGG. Over residues 344-353 the composition is skewed to polar residues; it reads SPGSQTSGFS.

The protein belongs to the protein kinase superfamily. Highly expressed in skeletal muscle, heart, uterus and parorchis. Weakly expressed in brain, stomach, small intestine and ovary.

It localises to the nucleus. It is found in the cytoplasm. The enzyme catalyses L-seryl-[protein] + ATP = O-phospho-L-seryl-[protein] + ADP + H(+). It carries out the reaction L-threonyl-[protein] + ATP = O-phospho-L-threonyl-[protein] + ADP + H(+). Its function is as follows. Serine/arginine-rich protein-specific kinase which specifically phosphorylates its substrates at serine residues located in regions rich in arginine/serine dipeptides, known as RS domains. Phosphorylates the SR splicing factor SRSF1 and the lamin-B receptor (LBR) in vitro. Required for normal muscle development. In Sus scrofa (Pig), this protein is SRSF protein kinase 3 (SRPK3).